The following is a 528-amino-acid chain: Glutamate--cysteine ligase (528 aa).

This sequence belongs to the glutamate--cysteine ligase type 1 family. Type 1 subfamily.

It catalyses the reaction L-cysteine + L-glutamate + ATP = gamma-L-glutamyl-L-cysteine + ADP + phosphate + H(+). The protein operates within sulfur metabolism; glutathione biosynthesis; glutathione from L-cysteine and L-glutamate: step 1/2. The protein is Glutamate--cysteine ligase of Janthinobacterium sp. (strain Marseille) (Minibacterium massiliensis).